Reading from the N-terminus, the 764-residue chain is Oxysterol-binding protein-related protein 10 (764 aa).

The tract at residues 1–74 is disordered; sequence MERAVQGTDG…PSGGGGRRRE (74 aa). 2 stretches are compositionally biased toward low complexity: residues 15 to 47 and 55 to 65; these read NSSS…SAAA and RSSPGSVAASP. Phosphoserine is present on residues Ser29 and Ser30. An Omega-N-methylarginine modification is found at Arg38. Phosphoserine is present on residues Ser57, Ser60, and Ser64. One can recognise a PH domain in the interval 74–171; that stretch reads EPALEGVLSK…WVTQLRACAK (98 aa). Thr196 carries the phosphothreonine modification. A phosphoserine mark is found at Ser201, Ser209, and Ser223. Disordered stretches follow at residues 304-335 and 354-391; these read GQPS…NGTL and AEDE…TELG. Residues 359–370 are compositionally biased toward polar residues; that stretch reads TSQPEPEPNSGS. Residues 374–389 are compositionally biased toward acidic residues; that stretch reads LSEDEKSDNEDKEETE. Residues 413–418 and 477–480 contribute to the a 1,2-diacyl-sn-glycero-3-phospho-(1D-myo-inositol 4-phosphate) site; these read LTKVVL and KPYN. A 1,2-diacyl-sn-glycero-3-phospho-L-serine-binding positions include 413-418 and Asn480; that span reads LTKVVL. The disordered stretch occupies residues 501-520; the sequence is KRTASRSPASCHEHPMADDP. Residues 511-520 are compositionally biased toward basic and acidic residues; that stretch reads CHEHPMADDP. Position 535 to 536 (535 to 536) interacts with a 1,2-diacyl-sn-glycero-3-phospho-(1D-myo-inositol 4-phosphate); sequence HH. Ser561 is a binding site for a 1,2-diacyl-sn-glycero-3-phospho-L-serine. Positions 713–740 form a coiled coil; that stretch reads DIDAATEQKRHLEEKQRVEERKRENLRT. A 1,2-diacyl-sn-glycero-3-phospho-(1D-myo-inositol 4-phosphate) is bound by residues Lys721, Glu725, and Arg729.

It belongs to the OSBP family. Interacts with OSBPL9. Interacts with DIAPH1.

The protein resides in the cytoplasm. It is found in the cytoskeleton. Functionally, probable lipid transporter involved in lipid countertransport between the endoplasmic reticulum and the plasma membrane. Its ability to bind phosphatidylserine, suggests that it specifically exchanges phosphatidylserine with phosphatidylinositol 4-phosphate (PI4P), delivering phosphatidylserine to the plasma membrane in exchange for PI4P. Plays a role in negative regulation of lipid biosynthesis. Negatively regulates APOB secretion from hepatocytes. Binds cholesterol and acidic phospholipids. Also binds 25-hydroxycholesterol. Binds phosphatidylserine. This chain is Oxysterol-binding protein-related protein 10 (OSBPL10), found in Homo sapiens (Human).